Consider the following 521-residue polypeptide: Non-specific phospholipase C5 (521 aa).

Positions 478–487 are enriched in basic and acidic residues; that stretch reads SKKARERGGD. Residues 478–521 are disordered; that stretch reads SKKARERGGDENDIVFCVDDDDDHNVVKPPPSQSEPSHATPWSN. A compositionally biased stretch (polar residues) spans 511 to 521; it reads SEPSHATPWSN.

It belongs to the bacterial phospholipase C family. As to expression, specifically expressed in flowers.

The protein localises to the cytoplasm. It is found in the cytosol. The enzyme catalyses a 1,2-diacyl-sn-glycero-3-phosphocholine + H2O = phosphocholine + a 1,2-diacyl-sn-glycerol + H(+). Functionally, non-specific phospholipase C (PLC) which assumes minor PLC activity during inorganic phosphate starvation. Can hydrolyze both phosphatidylcholine (PC) and phosphatidylethanolamine (PE). Required for normal accumulation of digalactosyldiacylglycerol (DGDG) during phosphate limitation and may contribute to the conversion of phospholipids to diacylglycerol, the substrate for galactolipid synthesis. In Arabidopsis thaliana (Mouse-ear cress), this protein is Non-specific phospholipase C5 (NPC5).